Consider the following 315-residue polypeptide: 4-hydroxy-3-methylbut-2-enyl diphosphate reductase (315 aa).

C12 serves as a coordination point for [4Fe-4S] cluster. 2 residues coordinate (2E)-4-hydroxy-3-methylbut-2-enyl diphosphate: H40 and H74. H40 and H74 together coordinate dimethylallyl diphosphate. 2 residues coordinate isopentenyl diphosphate: H40 and H74. C96 provides a ligand contact to [4Fe-4S] cluster. (2E)-4-hydroxy-3-methylbut-2-enyl diphosphate is bound at residue H124. Residue H124 coordinates dimethylallyl diphosphate. H124 serves as a coordination point for isopentenyl diphosphate. E126 functions as the Proton donor in the catalytic mechanism. Residue T167 participates in (2E)-4-hydroxy-3-methylbut-2-enyl diphosphate binding. C213 serves as a coordination point for [4Fe-4S] cluster. 4 residues coordinate (2E)-4-hydroxy-3-methylbut-2-enyl diphosphate: S241, S242, N243, and S290. Dimethylallyl diphosphate contacts are provided by S241, S242, N243, and S290. Isopentenyl diphosphate contacts are provided by S241, S242, N243, and S290.

The protein belongs to the IspH family. The cofactor is [4Fe-4S] cluster.

It carries out the reaction isopentenyl diphosphate + 2 oxidized [2Fe-2S]-[ferredoxin] + H2O = (2E)-4-hydroxy-3-methylbut-2-enyl diphosphate + 2 reduced [2Fe-2S]-[ferredoxin] + 2 H(+). It catalyses the reaction dimethylallyl diphosphate + 2 oxidized [2Fe-2S]-[ferredoxin] + H2O = (2E)-4-hydroxy-3-methylbut-2-enyl diphosphate + 2 reduced [2Fe-2S]-[ferredoxin] + 2 H(+). It participates in isoprenoid biosynthesis; dimethylallyl diphosphate biosynthesis; dimethylallyl diphosphate from (2E)-4-hydroxy-3-methylbutenyl diphosphate: step 1/1. Its pathway is isoprenoid biosynthesis; isopentenyl diphosphate biosynthesis via DXP pathway; isopentenyl diphosphate from 1-deoxy-D-xylulose 5-phosphate: step 6/6. In terms of biological role, catalyzes the conversion of 1-hydroxy-2-methyl-2-(E)-butenyl 4-diphosphate (HMBPP) into a mixture of isopentenyl diphosphate (IPP) and dimethylallyl diphosphate (DMAPP). Acts in the terminal step of the DOXP/MEP pathway for isoprenoid precursor biosynthesis. This Chloroherpeton thalassium (strain ATCC 35110 / GB-78) protein is 4-hydroxy-3-methylbut-2-enyl diphosphate reductase.